We begin with the raw amino-acid sequence, 423 residues long: uncharacterized protein (423 aa).

The region spanning 75–145 is the BON domain; the sequence is LHVVVTQPIA…PIVNNIKVAG (71 aa).

The protein belongs to the bacterial secretin family.

Functionally, involved in the secretion of an unknown compound. This is an uncharacterized protein from Sinorhizobium fredii (strain NBRC 101917 / NGR234).